An 880-amino-acid polypeptide reads, in one-letter code: Alanine--tRNA ligase (880 aa).

Positions 568, 572, 670, and 674 each coordinate Zn(2+).

The protein belongs to the class-II aminoacyl-tRNA synthetase family. Zn(2+) serves as cofactor.

Its subcellular location is the cytoplasm. The catalysed reaction is tRNA(Ala) + L-alanine + ATP = L-alanyl-tRNA(Ala) + AMP + diphosphate. Catalyzes the attachment of alanine to tRNA(Ala) in a two-step reaction: alanine is first activated by ATP to form Ala-AMP and then transferred to the acceptor end of tRNA(Ala). Also edits incorrectly charged Ser-tRNA(Ala) and Gly-tRNA(Ala) via its editing domain. This Enterococcus faecalis (strain ATCC 700802 / V583) protein is Alanine--tRNA ligase.